A 602-amino-acid chain; its full sequence is Prostaglandin G/H synthase 1 (602 aa).

Residues 1–26 (MSRRSLSLWFPLLLLLLLPPTPSVLL) form the signal peptide. The region spanning 34–72 (PVNPCCYYPCQNQGVCVRFGLDNYQCDCTRTGYSGPNCT) is the EGF-like domain. 4 cysteine pairs are disulfide-bonded: C38/C49, C39/C161, C43/C59, and C61/C71. N-linked (GlcNAc...) asparagine glycans are attached at residues N70, N106, and N146. Residue H209 is the Proton acceptor of the active site. The For cyclooxygenase activity role is filled by Y387. H390 is a heme b binding site. Residues C571 and C577 are joined by a disulfide bond.

Belongs to the prostaglandin G/H synthase family. Homodimer. Requires heme b as cofactor.

It is found in the microsome membrane. It localises to the endoplasmic reticulum membrane. The catalysed reaction is (5Z,8Z,11Z,14Z)-eicosatetraenoate + AH2 + 2 O2 = prostaglandin H2 + A + H2O. It catalyses the reaction (5Z,8Z,11Z,14Z)-eicosatetraenoate + 2 O2 = prostaglandin G2. The enzyme catalyses prostaglandin G2 + AH2 = prostaglandin H2 + A + H2O. It carries out the reaction (9Z,12Z)-octadecadienoate + AH2 + O2 = (9R)-hydroxy-(10E,12Z)-octadecadienoate + A + H2O. The catalysed reaction is (9Z,12Z)-octadecadienoate + AH2 + O2 = (9S)-hydroxy-(10E,12Z)-octadecadienoate + A + H2O. It catalyses the reaction (9Z,12Z)-octadecadienoate + AH2 + O2 = (13S)-hydroxy-(9Z,11E)-octadecadienoate + A + H2O. The enzyme catalyses (9Z,12Z)-octadecadienoate + AH2 + O2 = (13R)-hydroxy-(9Z,11E)-octadecadienoate + A + H2O. It participates in lipid metabolism; prostaglandin biosynthesis. Its activity is regulated as follows. The cyclooxygenase activity is inhibited by nonsteroidal anti-inflammatory drugs (NSAIDs) including ibuprofen, flurbiprofen, ketoprofen, naproxen, flurbiprofen, anirolac, fenclofenac and diclofenac. Functionally, dual cyclooxygenase and peroxidase that plays an important role in the biosynthesis pathway of prostanoids, a class of C20 oxylipins mainly derived from arachidonate ((5Z,8Z,11Z,14Z)-eicosatetraenoate, AA, C20:4(n-6)), with a particular role in the inflammatory response. The cyclooxygenase activity oxygenates AA to the hydroperoxy endoperoxide prostaglandin G2 (PGG2), and the peroxidase activity reduces PGG2 to the hydroxy endoperoxide prostaglandin H2 (PGH2), the precursor of all 2-series prostaglandins and thromboxanes. This complex transformation is initiated by abstraction of hydrogen at carbon 13 (with S-stereochemistry), followed by insertion of molecular O2 to form the endoperoxide bridge between carbon 9 and 11 that defines prostaglandins. The insertion of a second molecule of O2 (bis-oxygenase activity) yields a hydroperoxy group in PGG2 that is then reduced to PGH2 by two electrons. Involved in the constitutive production of prostanoids in particular in the stomach and platelets. In gastric epithelial cells, it is a key step in the generation of prostaglandins, such as prostaglandin E2 (PGE2), which plays an important role in cytoprotection. In platelets, it is involved in the generation of thromboxane A2 (TXA2), which promotes platelet activation and aggregation, vasoconstriction and proliferation of vascular smooth muscle cells. Can also use linoleate (LA, (9Z,12Z)-octadecadienoate, C18:2(n-6)) as substrate and produce hydroxyoctadecadienoates (HODEs) in a regio- and stereospecific manner, being (9R)-HODE ((9R)-hydroxy-(10E,12Z)-octadecadienoate) and (13S)-HODE ((13S)-hydroxy-(9Z,11E)-octadecadienoate) its major products. In Mus musculus (Mouse), this protein is Prostaglandin G/H synthase 1.